An 839-amino-acid polypeptide reads, in one-letter code: Probable inorganic carbon transporter subunit DabA (839 aa).

The Zn(2+) site is built by Cys-353, Asp-355, His-537, and Cys-552.

This sequence belongs to the inorganic carbon transporter (TC 9.A.2) DabA family. As to quaternary structure, forms a complex with DabB. It depends on Zn(2+) as a cofactor.

It localises to the cell membrane. Functionally, part of an energy-coupled inorganic carbon pump. The protein is Probable inorganic carbon transporter subunit DabA of Chloroflexus aggregans (strain MD-66 / DSM 9485).